Here is a 465-residue protein sequence, read N- to C-terminus: MPKKAKPAGSGKEEGPVPCKQMKVEAAGGPSALNFDSPSSLFESLISPIKTETFFKEFWEQKPLLIQRDDPALATYYGSLFKLTDLKSLCSRGMYYGRDVNVCRCVNGKKKVLNKDGKAHFLQLRKDFDQKRATIQLHQPQRFKDELWRIQEKLECYFGSLVGSNVYITPAGSQGLPPHYDDVEVFILQLEGEKHWRLYHPTVPLAREYSVEAEERIGRPVHEFMLKPGDLLYFPRGTIHQADTPAGLAHSTHVTISTYQNNSWGDFLLDTISGLVFDAAKEDVELRAGIPRQLLLQVESTTVATRRLSGFLRTLADRLEGTKEVLSSDMKKDFIMHRLPPYSAGDGAELSTPGGKLPRLDSVVRLQFKDHIVLTVLPDQDQSDEAQEKMVYIYHSLKNSREIHMMGNEEETESHGLRFPLSHLDALKQIWNSPAISVNDLKLTTDEEKESLVLSLWTECLIQVV.

The JmjC domain occupies 139 to 271 (QPQRFKDELW…NSWGDFLLDT (133 aa)). The Fe cation site is built by H179, D181, and H240. S309 is subject to Phosphoserine.

The protein belongs to the ROX family. MINA53 subfamily. It depends on Fe(2+) as a cofactor.

It localises to the nucleus. The protein resides in the nucleolus. The enzyme catalyses L-histidyl-[ribosomal protein uL15] + 2-oxoglutarate + O2 = (3S)-3-hydroxy-L-histidyl-[ribosomal protein uL15] + succinate + CO2. It carries out the reaction L-histidyl-[protein] + 2-oxoglutarate + O2 = (3S)-3-hydroxy-L-histidyl-[protein] + succinate + CO2. Its function is as follows. Oxygenase that can act as both a histone lysine demethylase and a ribosomal histidine hydroxylase. Is involved in the demethylation of trimethylated 'Lys-9' on histone H3 (H3K9me3), leading to an increase in ribosomal RNA expression. Also catalyzes the hydroxylation of 60S ribosomal protein L27a on 'His-39'. May play an important role in cell growth and survival. May be involved in ribosome biogenesis, most likely during the assembly process of pre-ribosomal particles. This is Ribosomal oxygenase 2 (RIOX2) from Pongo abelii (Sumatran orangutan).